We begin with the raw amino-acid sequence, 104 residues long: Nucleoid-associated protein OB0030 (104 aa).

Residues 1–23 are disordered; the sequence is MKGNMNNMMKQMQKMQKKMMQAQ.

This sequence belongs to the YbaB/EbfC family. As to quaternary structure, homodimer.

It is found in the cytoplasm. Its subcellular location is the nucleoid. In terms of biological role, binds to DNA and alters its conformation. May be involved in regulation of gene expression, nucleoid organization and DNA protection. This Oceanobacillus iheyensis (strain DSM 14371 / CIP 107618 / JCM 11309 / KCTC 3954 / HTE831) protein is Nucleoid-associated protein OB0030.